The chain runs to 770 residues: Nucleus-vacuole junction protein 2 (770 aa).

At 1–5 (MASLK) the chain is on the cytoplasmic side. Residues 6–26 (VFLAVYLLGGITFLPLVLFTL) traverse the membrane as a helical; Signal-anchor for type II membrane protein segment. Topologically, residues 27–770 (YKIHLLYSNL…EFEEQREPKL (744 aa)) are lumenal. Positions 114-266 (TALQEQILQR…WYYQLINASK (153 aa)) constitute a PH domain. N-linked (GlcNAc...) asparagine glycosylation is found at Asn228, Asn263, Asn279, Asn300, Asn391, Asn528, and Asn529. Residues 304–504 (NQLTTKWLNA…YPTPNEVYRG (201 aa)) enclose the SMP-LTD domain. Disordered regions lie at residues 541–566 (EGGM…LKDL), 578–600 (TQTT…TKSR), and 615–770 (KDNV…EPKL). A compositionally biased stretch (basic and acidic residues) spans 554 to 566 (LRPERKKENLKDL). Positions 587–596 (NDDVSSSENS) are enriched in polar residues. N-linked (GlcNAc...) asparagine glycosylation is found at Asn595 and Asn620. Residues Ser640 and Ser669 each carry the phosphoserine modification. Over residues 679-688 (LEGRKEKDTE) the composition is skewed to basic and acidic residues. The N-linked (GlcNAc...) asparagine glycan is linked to Asn700. Composition is skewed to polar residues over residues 713–725 (FSVS…NSLK) and 736–751 (LESS…QNRF). Ser717 carries the post-translational modification Phosphoserine. N-linked (GlcNAc...) asparagine glycosylation is present at Asn718. Residues Ser720 and Ser723 each carry the phosphoserine modification. Positions 756–770 (FKQDLEFEEQREPKL) are enriched in basic and acidic residues.

The protein localises to the endoplasmic reticulum membrane. The protein resides in the nucleus membrane. Functionally, during endoplasmic reticulum (ER) stress or when cellular ceramide levels increase, induces contacts between the ER and medial-Golgi complex to facilitate non-vesicular transport of ceramides from the ER to the Golgi complex where they are converted to complex sphingolipids, preventing toxic ceramide accumulation. The chain is Nucleus-vacuole junction protein 2 from Saccharomyces cerevisiae (strain ATCC 204508 / S288c) (Baker's yeast).